We begin with the raw amino-acid sequence, 335 residues long: Delta(7)-sterol 5(6)-desaturase erg3B (335 aa).

The next 3 membrane-spanning stretches (helical) occupy residues 74–94 (IWAF…ALVF), 113–133 (IGQA…LFLA), and 152–172 (LYTY…IYWI). One can recognise a Fatty acid hydroxylase domain in the interval 160–284 (LFIAFTDFAI…FITFWDRIGG (125 aa)). Positions 173–177 (HRGLH) match the Histidine box-1 motif. The Histidine box-2 signature appears at 186–190 (HKPHH). The helical transmembrane segment at 219–239 (PFLFPLQKAAYLGLFVFVTIW) threads the bilayer. Asparagine 256 carries an N-linked (GlcNAc...) asparagine glycan. The short motif at 261–265 (HTIHH) is the Histidine box-3 element.

Belongs to the sterol desaturase family. The cofactor is Fe cation.

The protein resides in the endoplasmic reticulum membrane. It functions in the pathway steroid metabolism; ergosterol biosynthesis. Functionally, delta(7)-sterol 5(6)-desaturase; part of the third module of ergosterol biosynthesis pathway that includes the late steps of the pathway. Erg3B catalyzes the introduction of a C-5 double bond in the B ring to produce 5-dehydroepisterol. The third module or late pathway involves the ergosterol synthesis itself through consecutive reactions that mainly occur in the endoplasmic reticulum (ER) membrane. Firstly, the squalene synthase erg9 catalyzes the condensation of 2 farnesyl pyrophosphate moieties to form squalene, which is the precursor of all steroids. Squalene synthase is crucial for balancing the incorporation of farnesyl diphosphate (FPP) into sterol and nonsterol isoprene synthesis. Secondly, squalene is converted into lanosterol by the consecutive action of the squalene epoxidase erg1 and the lanosterol synthase erg7. Then, the delta(24)-sterol C-methyltransferase erg6 methylates lanosterol at C-24 to produce eburicol. Eburicol is the substrate of the sterol 14-alpha demethylase encoded by cyp51A and cyp51B, to yield 4,4,24-trimethyl ergosta-8,14,24(28)-trienol. The C-14 reductase erg24 then reduces the C14=C15 double bond which leads to 4,4-dimethylfecosterol. A sequence of further demethylations at C-4, involving the C-4 demethylation complex containing the C-4 methylsterol oxidases erg25A or erg25B, the sterol-4-alpha-carboxylate 3-dehydrogenase erg26 and the 3-keto-steroid reductase erg27, leads to the production of fecosterol via 4-methylfecosterol. The C-8 sterol isomerase erg2 then catalyzes the reaction which results in unsaturation at C-7 in the B ring of sterols and thus converts fecosterol to episterol. The sterol-C5-desaturase erg3B then catalyzes the introduction of a C-5 double bond in the B ring to produce 5-dehydroepisterol. The 2 other sterol-C5-desaturases, erg3A and erg3C, seem to be less important in ergosterol biosynthesis. The C-22 sterol desaturase erg5 further converts 5-dehydroepisterol into ergosta-5,7,22,24(28)-tetraen-3beta-ol by forming the C-22(23) double bond in the sterol side chain. Finally, ergosta-5,7,22,24(28)-tetraen-3beta-ol is substrate of the C-24(28) sterol reductases erg4A and erg4B to produce ergosterol. Possible alternative sterol biosynthetic pathways might exist from fecosterol to ergosterol, depending on the activities of the erg3 isoforms. This chain is Delta(7)-sterol 5(6)-desaturase erg3B, found in Aspergillus fumigatus (strain ATCC MYA-4609 / CBS 101355 / FGSC A1100 / Af293) (Neosartorya fumigata).